The following is a 280-amino-acid chain: Energy-coupling factor transporter ATP-binding protein EcfA1 (280 aa).

An ABC transporter domain is found at 6-241 (LRIENISFQY…SHMLQEIGLD (236 aa)). 40 to 47 (GQNGSGKS) is an ATP binding site.

Belongs to the ABC transporter superfamily. Energy-coupling factor EcfA family. In terms of assembly, forms a stable energy-coupling factor (ECF) transporter complex composed of 2 membrane-embedded substrate-binding proteins (S component), 2 ATP-binding proteins (A component) and 2 transmembrane proteins (T component).

The protein resides in the cell membrane. Functionally, ATP-binding (A) component of a common energy-coupling factor (ECF) ABC-transporter complex. Unlike classic ABC transporters this ECF transporter provides the energy necessary to transport a number of different substrates. This Bacillus cereus (strain ATCC 14579 / DSM 31 / CCUG 7414 / JCM 2152 / NBRC 15305 / NCIMB 9373 / NCTC 2599 / NRRL B-3711) protein is Energy-coupling factor transporter ATP-binding protein EcfA1.